Here is a 286-residue protein sequence, read N- to C-terminus: Probable endonuclease 4 (286 aa).

Residues His67, His107, Glu146, Asp180, His183, His217, Asp230, His232, and Glu262 each contribute to the Zn(2+) site.

This sequence belongs to the AP endonuclease 2 family. Zn(2+) serves as cofactor.

The catalysed reaction is Endonucleolytic cleavage to 5'-phosphooligonucleotide end-products.. Its function is as follows. Endonuclease IV plays a role in DNA repair. It cleaves phosphodiester bonds at apurinic or apyrimidinic (AP) sites, generating a 3'-hydroxyl group and a 5'-terminal sugar phosphate. The polypeptide is Probable endonuclease 4 (Methanosphaerula palustris (strain ATCC BAA-1556 / DSM 19958 / E1-9c)).